We begin with the raw amino-acid sequence, 487 residues long: Zinc finger and BTB domain-containing protein 32 (487 aa).

Positions 29–87 (CDTLITVGGQEFPAHSLVLAGVSQQLGRRGQWALGEGISPSTFAQLLNFVYGESVELQP) constitute a BTB domain. Residues 113-166 (RGDRAKKPDPGLKKHQEEPEKPSRNAERELGDPGEKQKPEQVSRTGGREQEMLH) are compositionally biased toward basic and acidic residues. Disordered stretches follow at residues 113–208 (RGDR…ADGK) and 308–371 (QNQL…ARSR). The segment covering 308–320 (QNQLASSSPTPGS) has biased composition (polar residues). The segment covering 357–369 (PPRPHPPPAPPAR) has biased composition (pro residues). 3 C2H2-type zinc fingers span residues 373 to 395 (YACS…YRVH), 401 to 423 (FSCS…LRTH), and 428 to 450 (YRXX…MRGH). The tract at residues 468 to 487 (SSSRPSRPSTSPCCPSSSTT) is disordered.

It belongs to the krueppel C2H2-type zinc-finger protein family. Homodimer (via PTB domain). Interacts with the N-terminal of FANCC. Interacts with ZBTB16. Interacts with GATA3.

It is found in the nucleus. Its function is as follows. DNA-binding protein that binds to the to a 5'-TGTACAGTGT-3' core sequence. May function as a transcriptional transactivator and transcriptional repressor. Probably exerts its repressor effect by preventing GATA3 from binding to DNA. May play a role in regulating the differentiation and activation of helper T-cells. The protein is Zinc finger and BTB domain-containing protein 32 (ZBTB32) of Pan troglodytes (Chimpanzee).